The sequence spans 309 residues: Methionyl-tRNA formyltransferase (309 aa).

A (6S)-5,6,7,8-tetrahydrofolate-binding site is contributed by 110-113 (SLLP).

Belongs to the Fmt family.

It carries out the reaction L-methionyl-tRNA(fMet) + (6R)-10-formyltetrahydrofolate = N-formyl-L-methionyl-tRNA(fMet) + (6S)-5,6,7,8-tetrahydrofolate + H(+). In terms of biological role, attaches a formyl group to the free amino group of methionyl-tRNA(fMet). The formyl group appears to play a dual role in the initiator identity of N-formylmethionyl-tRNA by promoting its recognition by IF2 and preventing the misappropriation of this tRNA by the elongation apparatus. The chain is Methionyl-tRNA formyltransferase from Caldanaerobacter subterraneus subsp. tengcongensis (strain DSM 15242 / JCM 11007 / NBRC 100824 / MB4) (Thermoanaerobacter tengcongensis).